A 241-amino-acid polypeptide reads, in one-letter code: Thyroid transcription factor 1-associated protein 26 (241 aa).

2 disordered regions span residues 1 to 22 (MAPVRRSAKWRPGGIEARGEGV) and 182 to 205 (KRAAKKQEFERRKQEREEAQRQYK). Over residues 186–202 (KKQEFERRKQEREEAQR) the composition is skewed to basic and acidic residues.

This sequence belongs to the TAP26 family. In terms of assembly, interacts with NKX2-1. As to expression, ubiquitously expressed. In lung, expression is restricted to the alveolar epithelial cells.

It localises to the nucleus. Component of the transcription complexes of the pulmonary surfactant-associated protein-B (SFTPB) and -C (SFTPC). Enhances homeobox protein Nkx-2.1-activated SFTPB and SFTPC promoter activities. This is Thyroid transcription factor 1-associated protein 26 (CCDC59) from Homo sapiens (Human).